Reading from the N-terminus, the 513-residue chain is Histidine ammonia-lyase (513 aa).

The 5-imidazolinone (Ala-Gly) cross-link spans 142-144 (ASG). S143 carries the 2,3-didehydroalanine (Ser) modification.

The protein belongs to the PAL/histidase family. In terms of processing, contains an active site 4-methylidene-imidazol-5-one (MIO), which is formed autocatalytically by cyclization and dehydration of residues Ala-Ser-Gly.

Its subcellular location is the cytoplasm. It catalyses the reaction L-histidine = trans-urocanate + NH4(+). The protein operates within amino-acid degradation; L-histidine degradation into L-glutamate; N-formimidoyl-L-glutamate from L-histidine: step 1/3. The protein is Histidine ammonia-lyase of Methylobacterium sp. (strain 4-46).